A 293-amino-acid chain; its full sequence is 4-hydroxy-tetrahydrodipicolinate synthase (293 aa).

Thr-45 is a binding site for pyruvate. Tyr-133 serves as the catalytic Proton donor/acceptor. The Schiff-base intermediate with substrate role is filled by Lys-162. Pyruvate is bound at residue Ile-204.

The protein belongs to the DapA family. As to quaternary structure, homotetramer; dimer of dimers.

It is found in the cytoplasm. The enzyme catalyses L-aspartate 4-semialdehyde + pyruvate = (2S,4S)-4-hydroxy-2,3,4,5-tetrahydrodipicolinate + H2O + H(+). The protein operates within amino-acid biosynthesis; L-lysine biosynthesis via DAP pathway; (S)-tetrahydrodipicolinate from L-aspartate: step 3/4. Catalyzes the condensation of (S)-aspartate-beta-semialdehyde [(S)-ASA] and pyruvate to 4-hydroxy-tetrahydrodipicolinate (HTPA). This Mesorhizobium japonicum (strain LMG 29417 / CECT 9101 / MAFF 303099) (Mesorhizobium loti (strain MAFF 303099)) protein is 4-hydroxy-tetrahydrodipicolinate synthase.